Reading from the N-terminus, the 176-residue chain is 3-hydroxydecanoyl-[acyl-carrier-protein] dehydratase (176 aa).

Histidine 71 is a catalytic residue.

This sequence belongs to the thioester dehydratase family. FabA subfamily. Homodimer.

Its subcellular location is the cytoplasm. It catalyses the reaction a (3R)-hydroxyacyl-[ACP] = a (2E)-enoyl-[ACP] + H2O. The enzyme catalyses (3R)-hydroxydecanoyl-[ACP] = (2E)-decenoyl-[ACP] + H2O. The catalysed reaction is (2E)-decenoyl-[ACP] = (3Z)-decenoyl-[ACP]. The protein operates within lipid metabolism; fatty acid biosynthesis. Its function is as follows. Necessary for the introduction of cis unsaturation into fatty acids. Catalyzes the dehydration of (3R)-3-hydroxydecanoyl-ACP to E-(2)-decenoyl-ACP and then its isomerization to Z-(3)-decenoyl-ACP. Can catalyze the dehydratase reaction for beta-hydroxyacyl-ACPs with saturated chain lengths up to 16:0, being most active on intermediate chain length. In Rhodopseudomonas palustris (strain BisA53), this protein is 3-hydroxydecanoyl-[acyl-carrier-protein] dehydratase.